The following is a 465-amino-acid chain: Siroheme synthase (465 aa).

A precorrin-2 dehydrogenase /sirohydrochlorin ferrochelatase region spans residues 1–203; the sequence is MEYLPLFHNL…GRTAEAERLL (203 aa). NAD(+)-binding positions include 22–23 and 43–44; these read EI and PS. Residue Ser-128 is modified to Phosphoserine. Residues 216 to 465 form a uroporphyrinogen-III C-methyltransferase region; it reads GEVYLVGAGP…WFEGAQAAGR (250 aa). Pro-225 provides a ligand contact to S-adenosyl-L-methionine. Asp-248 acts as the Proton acceptor in catalysis. The active-site Proton donor is the Lys-270. S-adenosyl-L-methionine-binding positions include 301–303, Ile-306, 331–332, Met-383, and Gly-412; these read GGD and TA.

This sequence in the N-terminal section; belongs to the precorrin-2 dehydrogenase / sirohydrochlorin ferrochelatase family. The protein in the C-terminal section; belongs to the precorrin methyltransferase family.

The catalysed reaction is uroporphyrinogen III + 2 S-adenosyl-L-methionine = precorrin-2 + 2 S-adenosyl-L-homocysteine + H(+). It carries out the reaction precorrin-2 + NAD(+) = sirohydrochlorin + NADH + 2 H(+). The enzyme catalyses siroheme + 2 H(+) = sirohydrochlorin + Fe(2+). It participates in cofactor biosynthesis; adenosylcobalamin biosynthesis; precorrin-2 from uroporphyrinogen III: step 1/1. It functions in the pathway cofactor biosynthesis; adenosylcobalamin biosynthesis; sirohydrochlorin from precorrin-2: step 1/1. The protein operates within porphyrin-containing compound metabolism; siroheme biosynthesis; precorrin-2 from uroporphyrinogen III: step 1/1. Its pathway is porphyrin-containing compound metabolism; siroheme biosynthesis; siroheme from sirohydrochlorin: step 1/1. It participates in porphyrin-containing compound metabolism; siroheme biosynthesis; sirohydrochlorin from precorrin-2: step 1/1. Functionally, multifunctional enzyme that catalyzes the SAM-dependent methylations of uroporphyrinogen III at position C-2 and C-7 to form precorrin-2 via precorrin-1. Then it catalyzes the NAD-dependent ring dehydrogenation of precorrin-2 to yield sirohydrochlorin. Finally, it catalyzes the ferrochelation of sirohydrochlorin to yield siroheme. The chain is Siroheme synthase from Stutzerimonas stutzeri (strain A1501) (Pseudomonas stutzeri).